The primary structure comprises 720 residues: 1-deoxy-D-xylulose-5-phosphate synthase 1, chloroplastic (720 aa).

Residues 1–51 constitute a chloroplast transit peptide; it reads MALTTFSISRGGFVGALPQEGHFAPAAAELSLHKLQSRPHKARRRSSSSIS. A compositionally biased stretch (basic residues) spans 35–46; sequence LQSRPHKARRRS. The interval 35–74 is disordered; it reads LQSRPHKARRRSSSSISASLSTEREAAEYHSQRPPTPLLD. The span at 56 to 65 shows a compositional bias: basic and acidic residues; the sequence is TEREAAEYHS. Residues His142 and 183 to 185 each bind thiamine diphosphate; that span reads GHS. Asp214 provides a ligand contact to Mg(2+). Residues 215–216, Asn243, Tyr364, and Glu446 contribute to the thiamine diphosphate site; that span reads GA. Asn243 serves as a coordination point for Mg(2+).

The protein belongs to the transketolase family. DXPS subfamily. Homodimer. Mg(2+) is required as a cofactor. Thiamine diphosphate serves as cofactor.

The protein localises to the plastid. It localises to the chloroplast stroma. It carries out the reaction D-glyceraldehyde 3-phosphate + pyruvate + H(+) = 1-deoxy-D-xylulose 5-phosphate + CO2. It functions in the pathway metabolic intermediate biosynthesis; 1-deoxy-D-xylulose 5-phosphate biosynthesis; 1-deoxy-D-xylulose 5-phosphate from D-glyceraldehyde 3-phosphate and pyruvate: step 1/1. In terms of biological role, catalyzes the acyloin condensation reaction between C atoms 2 and 3 of pyruvate and glyceraldehyde 3-phosphate to yield 1-deoxy-D-xylulose-5-phosphate (DXP). Is a limiting enzyme for plastidic isoprenoid biosynthesis and essential for chloroplast development. This Oryza sativa subsp. japonica (Rice) protein is 1-deoxy-D-xylulose-5-phosphate synthase 1, chloroplastic (CLA1).